The chain runs to 497 residues: Glycogen synthase (497 aa).

Lys15 is an ADP-alpha-D-glucose binding site.

The protein belongs to the glycosyltransferase 1 family. Bacterial/plant glycogen synthase subfamily.

It carries out the reaction [(1-&gt;4)-alpha-D-glucosyl](n) + ADP-alpha-D-glucose = [(1-&gt;4)-alpha-D-glucosyl](n+1) + ADP + H(+). Its pathway is glycan biosynthesis; glycogen biosynthesis. Functionally, synthesizes alpha-1,4-glucan chains using ADP-glucose. In Thermodesulfovibrio yellowstonii (strain ATCC 51303 / DSM 11347 / YP87), this protein is Glycogen synthase.